A 154-amino-acid polypeptide reads, in one-letter code: uncharacterized protein (154 aa).

Transmembrane regions (helical) follow at residues 39–61, 65–87, 94–113, and 128–150; these read LLIF…FFAR, LPYI…VSLL, VESL…RVFI, and LLIN…SPFT.

It localises to the cell membrane. This is an uncharacterized protein from Aquifex aeolicus (strain VF5).